Here is a 327-residue protein sequence, read N- to C-terminus: Cyclin-A3-3 (327 aa).

The protein belongs to the cyclin family. Cyclin AB subfamily.

The sequence is that of Cyclin-A3-3 (CYCA3-3) from Arabidopsis thaliana (Mouse-ear cress).